Reading from the N-terminus, the 323-residue chain is Lipoyl synthase (323 aa).

Positions 61, 66, 72, 87, 91, 94, and 300 each coordinate [4Fe-4S] cluster. One can recognise a Radical SAM core domain in the interval 73–289 (WDKKHATFMI…ETVAYTKGFL (217 aa)).

The protein belongs to the radical SAM superfamily. Lipoyl synthase family. [4Fe-4S] cluster is required as a cofactor.

Its subcellular location is the cytoplasm. It carries out the reaction [[Fe-S] cluster scaffold protein carrying a second [4Fe-4S](2+) cluster] + N(6)-octanoyl-L-lysyl-[protein] + 2 oxidized [2Fe-2S]-[ferredoxin] + 2 S-adenosyl-L-methionine + 4 H(+) = [[Fe-S] cluster scaffold protein] + N(6)-[(R)-dihydrolipoyl]-L-lysyl-[protein] + 4 Fe(3+) + 2 hydrogen sulfide + 2 5'-deoxyadenosine + 2 L-methionine + 2 reduced [2Fe-2S]-[ferredoxin]. It participates in protein modification; protein lipoylation via endogenous pathway; protein N(6)-(lipoyl)lysine from octanoyl-[acyl-carrier-protein]: step 2/2. Functionally, catalyzes the radical-mediated insertion of two sulfur atoms into the C-6 and C-8 positions of the octanoyl moiety bound to the lipoyl domains of lipoate-dependent enzymes, thereby converting the octanoylated domains into lipoylated derivatives. This chain is Lipoyl synthase, found in Sinorhizobium medicae (strain WSM419) (Ensifer medicae).